A 279-amino-acid polypeptide reads, in one-letter code: Aspartate/glutamate leucyltransferase (279 aa).

A disordered region spans residues 245 to 279 (ARERGARPPRGPGALKDACDLPLSDAQPADIEDLD).

Belongs to the R-transferase family. Bpt subfamily.

It is found in the cytoplasm. The catalysed reaction is N-terminal L-glutamyl-[protein] + L-leucyl-tRNA(Leu) = N-terminal L-leucyl-L-glutamyl-[protein] + tRNA(Leu) + H(+). It catalyses the reaction N-terminal L-aspartyl-[protein] + L-leucyl-tRNA(Leu) = N-terminal L-leucyl-L-aspartyl-[protein] + tRNA(Leu) + H(+). Functionally, functions in the N-end rule pathway of protein degradation where it conjugates Leu from its aminoacyl-tRNA to the N-termini of proteins containing an N-terminal aspartate or glutamate. This chain is Aspartate/glutamate leucyltransferase, found in Caulobacter vibrioides (strain ATCC 19089 / CIP 103742 / CB 15) (Caulobacter crescentus).